A 331-amino-acid polypeptide reads, in one-letter code: Protein-methionine-sulfoxide reductase catalytic subunit MsrP (331 aa).

A signal peptide (tat-type signal) is located at residues 1–57; sequence MLIKKTLRAALAGDDIPRSEITPRAVFEHRRRILQAAGAAAAGGLVGAHGLALAAYA. Mo-molybdopterin is bound by residues N90, 93 to 94, C148, T183, N231, R236, and 247 to 249; these read YE and SAK.

The protein belongs to the MsrP family. In terms of assembly, heterodimer of a catalytic subunit (MsrP) and a heme-binding subunit (MsrQ). Mo-molybdopterin is required as a cofactor. Predicted to be exported by the Tat system. The position of the signal peptide cleavage has not been experimentally proven.

The protein localises to the periplasm. It catalyses the reaction L-methionyl-[protein] + a quinone + H2O = L-methionyl-(S)-S-oxide-[protein] + a quinol. It carries out the reaction L-methionyl-[protein] + a quinone + H2O = L-methionyl-(R)-S-oxide-[protein] + a quinol. In terms of biological role, part of the MsrPQ system that repairs oxidized periplasmic proteins containing methionine sulfoxide residues (Met-O), using respiratory chain electrons. Thus protects these proteins from oxidative-stress damage caused by reactive species of oxygen and chlorine generated by the host defense mechanisms. MsrPQ is essential for the maintenance of envelope integrity under bleach stress, rescuing a wide series of structurally unrelated periplasmic proteins from methionine oxidation. The catalytic subunit MsrP is non-stereospecific, being able to reduce both (R-) and (S-) diastereoisomers of methionine sulfoxide. This chain is Protein-methionine-sulfoxide reductase catalytic subunit MsrP, found in Burkholderia mallei (strain ATCC 23344).